The chain runs to 693 residues: Sodium-dependent phosphate transport protein 2B (693 aa).

The segment at 1–46 (MAPWPELENSQPTSEKYTVKADGEQSAKPEKAKETEKDDTGTPITK) is disordered. The Cytoplasmic segment spans residues 1-89 (MAPWPELENS…KWSERDTKGK (89 aa)). Positions 17–40 (YTVKADGEQSAKPEKAKETEKDDT) are enriched in basic and acidic residues. Residues 90-110 (ILCVFQGIGKFILLLVFLYFF) traverse the membrane as a helical segment. The Extracellular portion of the chain corresponds to 111-135 (VCSLDVLSSAFQLVGGKVAGKFFNN). Residues 136-156 (NSIMSNPLAGMVIGVLVTVLV) form a helical membrane-spanning segment. Residues 157–212 (QSSSTSTSIVVSMVASSLLPVHAAIPIIMGANIGTSITNTIVALMQAGDRKEFRRA) are Cytoplasmic-facing. Residues 213 to 233 (FAGATVHDFFNWLSVLVLLPL) form a helical membrane-spanning segment. The Extracellular segment spans residues 234–361 (EAATGYLERL…IFVNFNLSDA (128 aa)). Cysteine 302 and cysteine 349 are joined by a disulfide. N-linked (GlcNAc...) asparagine glycans are attached at residues asparagine 307 and asparagine 320. The chain crosses the membrane as a helical span at residues 362-382 (IVGTILLITSLLILCTCLILI). The Cytoplasmic segment spans residues 383–408 (VKLLGSVLRGQVAAVIKKTINTDFPY). A helical transmembrane segment spans residues 409-429 (PFSWVTGYLAILVGAGMTFIV). Residues 430–485 (QSSSVFTSAMTPLIGIGVISIQRAYPLTLGANIGTTTTAILAALASPGSTLKSSLQ) are Extracellular-facing. Residues 486–506 (IALCHFFFNISGIILWYPIPF) traverse the membrane as a helical segment. Residues 507 to 525 (TRLPIRLAKGLGNISSKYR) lie on the Cytoplasmic side of the membrane. A helical membrane pass occupies residues 526–546 (WFAIVYLIVFFLLIPLAVFGL). Over 547–550 (SLIG) the chain is Extracellular. Residues 551 to 571 (WPVLVGVASPIVLVILLVVVL) form a helical membrane-spanning segment. Residues 572-693 (KILQSFCPGS…TKIVSSVTAL (122 aa)) lie on the Cytoplasmic side of the membrane.

This sequence belongs to the SLC34A transporter family. Glycosylated.

It is found in the apical cell membrane. The enzyme catalyses 3 Na(+)(out) + phosphate(out) = 3 Na(+)(in) + phosphate(in). Its function is as follows. Involved in actively transporting phosphate into cells via Na(+) cotransport. This chain is Sodium-dependent phosphate transport protein 2B (SLC34A2), found in Bos taurus (Bovine).